Consider the following 349-residue polypeptide: N-acetyl-gamma-glutamyl-phosphate reductase (349 aa).

Residue Cys149 is part of the active site.

It belongs to the NAGSA dehydrogenase family. Type 1 subfamily.

It is found in the cytoplasm. The catalysed reaction is N-acetyl-L-glutamate 5-semialdehyde + phosphate + NADP(+) = N-acetyl-L-glutamyl 5-phosphate + NADPH + H(+). Its pathway is amino-acid biosynthesis; L-arginine biosynthesis; N(2)-acetyl-L-ornithine from L-glutamate: step 3/4. Catalyzes the NADPH-dependent reduction of N-acetyl-5-glutamyl phosphate to yield N-acetyl-L-glutamate 5-semialdehyde. This is N-acetyl-gamma-glutamyl-phosphate reductase from Acinetobacter baumannii (strain SDF).